The primary structure comprises 137 residues: Nucleoside diphosphate kinase (137 aa).

ATP is bound by residues lysine 9, phenylalanine 57, arginine 85, threonine 91, arginine 102, and asparagine 112. Histidine 115 serves as the catalytic Pros-phosphohistidine intermediate.

The protein belongs to the NDK family. Homotetramer. The cofactor is Mg(2+).

The protein localises to the cytoplasm. The enzyme catalyses a 2'-deoxyribonucleoside 5'-diphosphate + ATP = a 2'-deoxyribonucleoside 5'-triphosphate + ADP. The catalysed reaction is a ribonucleoside 5'-diphosphate + ATP = a ribonucleoside 5'-triphosphate + ADP. Functionally, major role in the synthesis of nucleoside triphosphates other than ATP. The ATP gamma phosphate is transferred to the NDP beta phosphate via a ping-pong mechanism, using a phosphorylated active-site intermediate. The protein is Nucleoside diphosphate kinase of Campylobacter concisus (strain 13826).